Reading from the N-terminus, the 266-residue chain is Signal peptidase I (266 aa).

The Cytoplasmic portion of the chain corresponds to 1–20; the sequence is MQTDNTKSNTNKTAKQEWGS. The chain crosses the membrane as a helical span at residues 21 to 41; it reads FAFVICIALLIRILIMEPFTV. Over 42-266 the chain is Periplasmic; it reads PTGSMKATIL…IFRNLYNTDA (225 aa). Active-site residues include Ser-45 and Lys-108.

It belongs to the peptidase S26 family.

The protein resides in the cell inner membrane. The catalysed reaction is Cleavage of hydrophobic, N-terminal signal or leader sequences from secreted and periplasmic proteins.. Functionally, complements E.coli mutants temperature-sensitive for LepB function. This is Signal peptidase I (lepB) from Rickettsia rickettsii (strain Sheila Smith).